Reading from the N-terminus, the 290-residue chain is uncharacterized protein (290 aa).

The next 6 membrane-spanning stretches (helical) occupy residues 71 to 91, 124 to 144, 155 to 175, 202 to 222, 234 to 254, and 262 to 282; these read FWSF…VKNI, GILI…LPGM, IIIG…YILV, FILV…LQLV, MFSI…VLTP, and ILLS…VLVV.

It belongs to the TatC family.

The protein resides in the plastid. Its subcellular location is the chloroplast membrane. This is an uncharacterized protein from Guillardia theta (Cryptophyte).